Consider the following 154-residue polypeptide: Putative pre-16S rRNA nuclease (154 aa).

It belongs to the YqgF nuclease family.

The protein resides in the cytoplasm. Could be a nuclease involved in processing of the 5'-end of pre-16S rRNA. This chain is Putative pre-16S rRNA nuclease, found in Rickettsia akari (strain Hartford).